A 189-amino-acid polypeptide reads, in one-letter code: UPF0301 protein Cgl3084/cg3414 (189 aa).

It belongs to the UPF0301 (AlgH) family.

The protein is UPF0301 protein Cgl3084/cg3414 of Corynebacterium glutamicum (strain ATCC 13032 / DSM 20300 / JCM 1318 / BCRC 11384 / CCUG 27702 / LMG 3730 / NBRC 12168 / NCIMB 10025 / NRRL B-2784 / 534).